The following is a 264-amino-acid chain: Thymidylate synthase (264 aa).

DUMP-binding positions include Arg21 and 126–127; that span reads RR. The active-site Nucleophile is the Cys146. DUMP-binding positions include 166–169, Asn177, and 207–209; these read RSAD and HLY. Asp169 is a (6R)-5,10-methylene-5,6,7,8-tetrahydrofolate binding site. Ala263 is a binding site for (6R)-5,10-methylene-5,6,7,8-tetrahydrofolate.

It belongs to the thymidylate synthase family. Bacterial-type ThyA subfamily. Homodimer.

It localises to the cytoplasm. The catalysed reaction is dUMP + (6R)-5,10-methylene-5,6,7,8-tetrahydrofolate = 7,8-dihydrofolate + dTMP. The protein operates within pyrimidine metabolism; dTTP biosynthesis. Its function is as follows. Catalyzes the reductive methylation of 2'-deoxyuridine-5'-monophosphate (dUMP) to 2'-deoxythymidine-5'-monophosphate (dTMP) while utilizing 5,10-methylenetetrahydrofolate (mTHF) as the methyl donor and reductant in the reaction, yielding dihydrofolate (DHF) as a by-product. This enzymatic reaction provides an intracellular de novo source of dTMP, an essential precursor for DNA biosynthesis. The protein is Thymidylate synthase of Rhodopseudomonas palustris (strain BisB5).